A 140-amino-acid chain; its full sequence is Cystatin-like 1 (140 aa).

A signal peptide spans 1 to 23 (MEMKARGLRIPLLLLLVTVVVMA). One can recognise a Cystatin domain in the interval 32-126 (GGFKEKAMSK…CKSLIYSVPW (95 aa)). Residue Asn45 is glycosylated (N-linked (GlcNAc...) asparagine). 2 disulfides stabilise this stretch: Cys94–Cys104 and Cys117–Cys137.

The protein belongs to the cystatin family. Highly expressed in testis where it localizes to spermatogonium, spermatocyes and round spermatids. Not detected in spermatozoa. Also detected in epididymis, cerebrum and pituitary.

Its subcellular location is the secreted. This is Cystatin-like 1 from Mus musculus (Mouse).